Consider the following 254-residue polypeptide: 5'-nucleotidase SurE (254 aa).

Residues Asp8, Asp9, Ser40, and Asn93 each contribute to the a divalent metal cation site.

The protein belongs to the SurE nucleotidase family. The cofactor is a divalent metal cation.

It is found in the cytoplasm. It catalyses the reaction a ribonucleoside 5'-phosphate + H2O = a ribonucleoside + phosphate. Functionally, nucleotidase that shows phosphatase activity on nucleoside 5'-monophosphates. This chain is 5'-nucleotidase SurE, found in Actinobacillus pleuropneumoniae serotype 5b (strain L20).